The primary structure comprises 593 residues: MRTHYCSAVNELSLDKQITVCGWVHNRRDHGGVIFLDIRDRSGLLQVVYEPENKEIFAIAEKLRSEFVVRVTGIVRKRPEGMINDKMETGRVEVIGTQLEILNQSPTPPFLPDDHQIINEDLRYKYRYIDLRRAVMQKKLTLRHKLNSCIRNYLNEQNFLDIETPMLTKATPEGARDYLVPSRVHPGQFYALPQSPQLFKQLLMMSGFDKYYQIVRCFRDEDLRADRQPEFTQLDIEMAFINEEDILQLIEGLLKIVFKEILNITLPDKLPRMSYKEAMTRYGSDKPDLRNPLELIDIADLVKDCDFNVFASAANDNSGRVVALKLPNGCDLSRKDLDNYGQFVTIYGAKGLAYIKVNDLSAGMAGLQSPILKFLSETAVHSILNRVEAQTGDVIFFGADKAHVVNESMGALRNKLGHDRNLINSGWQLLWVVDWPMFELDPQSNKLQPMHHPFTSPQELSAEALRSKPTQTLAKAYDIVINGYEIGGGSIRIHQPELQKTVFDLIGIDEQEAHEKFGFLLDALQYGAPPHGGIALGIDRLAMLLTDSTSIRDVIAFPKTQTASCPLTSAPSPAGNAQLTELGIRLAPTITTK.

Glu-173 is an L-aspartate binding site. The segment at 197 to 200 (QLFK) is aspartate. Arg-219 is an L-aspartate binding site. ATP contacts are provided by residues 219 to 221 (RDE) and Gln-228. Position 451 (His-451) interacts with L-aspartate. ATP is bound at residue Glu-485. L-aspartate is bound at residue Arg-492. ATP is bound at residue 537–540 (GIDR).

Belongs to the class-II aminoacyl-tRNA synthetase family. Type 1 subfamily. In terms of assembly, homodimer.

It is found in the cytoplasm. It carries out the reaction tRNA(Asx) + L-aspartate + ATP = L-aspartyl-tRNA(Asx) + AMP + diphosphate. Its function is as follows. Aspartyl-tRNA synthetase with relaxed tRNA specificity since it is able to aspartylate not only its cognate tRNA(Asp) but also tRNA(Asn). Reaction proceeds in two steps: L-aspartate is first activated by ATP to form Asp-AMP and then transferred to the acceptor end of tRNA(Asp/Asn). The sequence is that of Aspartate--tRNA(Asp/Asn) ligase from Legionella pneumophila subsp. pneumophila (strain Philadelphia 1 / ATCC 33152 / DSM 7513).